Reading from the N-terminus, the 264-residue chain is ATP synthase subunit a (264 aa).

6 consecutive transmembrane segments (helical) span residues 29–49 (TWHI…LWIF), 87–107 (NALI…MNFM), 134–154 (DVNI…YYSI), 177–197 (IPVN…SLAL), 208–228 (LIFI…SLGV), and 235–255 (LIFH…LTIV).

It belongs to the ATPase A chain family. As to quaternary structure, F-type ATPases have 2 components, CF(1) - the catalytic core - and CF(0) - the membrane proton channel. CF(1) has five subunits: alpha(3), beta(3), gamma(1), delta(1), epsilon(1). CF(0) has three main subunits: a(1), b(2) and c(9-12). The alpha and beta chains form an alternating ring which encloses part of the gamma chain. CF(1) is attached to CF(0) by a central stalk formed by the gamma and epsilon chains, while a peripheral stalk is formed by the delta and b chains.

The protein localises to the cell inner membrane. In terms of biological role, key component of the proton channel; it plays a direct role in the translocation of protons across the membrane. The chain is ATP synthase subunit a from Shewanella sp. (strain MR-4).